Here is a 98-residue protein sequence, read N- to C-terminus: Small ribosomal subunit protein bS6 (98 aa).

It belongs to the bacterial ribosomal protein bS6 family.

Functionally, binds together with bS18 to 16S ribosomal RNA. This is Small ribosomal subunit protein bS6 from Limosilactobacillus reuteri (strain DSM 20016) (Lactobacillus reuteri).